Reading from the N-terminus, the 302-residue chain is Methionyl-tRNA formyltransferase (302 aa).

108 to 111 (SLLP) contributes to the (6S)-5,6,7,8-tetrahydrofolate binding site.

It belongs to the Fmt family.

It catalyses the reaction L-methionyl-tRNA(fMet) + (6R)-10-formyltetrahydrofolate = N-formyl-L-methionyl-tRNA(fMet) + (6S)-5,6,7,8-tetrahydrofolate + H(+). Its function is as follows. Attaches a formyl group to the free amino group of methionyl-tRNA(fMet). The formyl group appears to play a dual role in the initiator identity of N-formylmethionyl-tRNA by promoting its recognition by IF2 and preventing the misappropriation of this tRNA by the elongation apparatus. This Nitratiruptor sp. (strain SB155-2) protein is Methionyl-tRNA formyltransferase.